The chain runs to 37 residues: Large ribosomal subunit protein bL36 (37 aa).

The protein belongs to the bacterial ribosomal protein bL36 family.

This is Large ribosomal subunit protein bL36 from Caldanaerobacter subterraneus subsp. tengcongensis (strain DSM 15242 / JCM 11007 / NBRC 100824 / MB4) (Thermoanaerobacter tengcongensis).